The following is a 393-amino-acid chain: Bone morphogenetic protein 15 (393 aa).

The first 25 residues, 1–25 (MVLLSILRILLWGLVLFMEHRVQMT), serve as a signal peptide directing secretion. Residues 26–268 (QVGQPSIAHL…DPSLLLRRAR (243 aa)) constitute a propeptide that is removed on maturation. N-linked (GlcNAc...) asparagine glycosylation is found at asparagine 86 and asparagine 237. 3 cysteine pairs are disulfide-bonded: cysteine 292–cysteine 358, cysteine 321–cysteine 390, and cysteine 325–cysteine 392. N-linked (GlcNAc...) asparagine glycosylation occurs at asparagine 374.

It belongs to the TGF-beta family. As to quaternary structure, homodimer. But, in contrast to other members of this family, cannot be disulfide-linked.

The protein localises to the secreted. May be involved in follicular development. Oocyte-specific growth/differentiation factor that stimulates folliculogenesis and granulosa cell (GC) growth. The polypeptide is Bone morphogenetic protein 15 (BMP15) (Ovis aries (Sheep)).